The following is a 1103-amino-acid chain: Voltage-dependent calcium channel subunit alpha-2/delta-1 (1103 aa).

A signal peptide spans 1-24 (MAAGCLLALTLTLFQSLLIGPSSE). Residues 25 to 1073 (EPFPSAVTIK…VLEDYTDCGG (1049 aa)) lie on the Extracellular side of the membrane. Asparagine 92 carries N-linked (GlcNAc...) asparagine glycosylation. At serine 119 the chain carries Phosphoserine. Asparagine 136 and asparagine 184 each carry an N-linked (GlcNAc...) asparagine glycan. The 178-residue stretch at 253 to 430 (DMLILVDVSG…INTQEYLDVL (178 aa)) folds into the VWFA domain. A divalent metal cation-binding residues include aspartate 259, serine 261, and serine 263. Residues 259–263 (DVSGS) carry the MIDAS-like motif motif. Asparagine 324, asparagine 348, asparagine 468, asparagine 475, asparagine 604, asparagine 613, asparagine 675, asparagine 781, asparagine 824, asparagine 888, asparagine 895, asparagine 985, and asparagine 998 each carry an N-linked (GlcNAc...) asparagine glycan. A disulfide bridge connects residues cysteine 404 and cysteine 1059. In terms of domain architecture, Cache spans 446 to 556 (WTNVYLDALE…NIQNPKSQEP (111 aa)). The chain crosses the membrane as a helical span at residues 1074–1094 (VSGLNPSLWYIIGIQFLLLWL). Topologically, residues 1095–1103 (VSGSTHRLL) are cytoplasmic.

The protein belongs to the calcium channel subunit alpha-2/delta family. In terms of assembly, dimer formed of alpha-2-1 and delta-1 chains; disulfide-linked. Voltage-dependent calcium channels are multisubunit complexes, consisting of alpha-1 (CACNA1), alpha-2 (CACNA2D), beta (CACNB) and delta (CACNA2D) subunits in a 1:1:1:1 ratio. Proteolytically processed into subunits alpha-2-1 and delta-1 that are disulfide-linked. In terms of tissue distribution, isoform 1 is expressed in skeletal muscle. Isoform 2 is expressed in the central nervous system. Isoform 2, isoform 4 and isoform 5 are expressed in neuroblastoma cells. Isoform 3, isoform 4 and isoform 5 are expressed in the aorta.

It is found in the membrane. The protein resides in the cell membrane. The alpha-2/delta subunit of voltage-dependent calcium channels regulates calcium current density and activation/inactivation kinetics of the calcium channel. Plays an important role in excitation-contraction coupling. In Homo sapiens (Human), this protein is Voltage-dependent calcium channel subunit alpha-2/delta-1 (CACNA2D1).